An 804-amino-acid chain; its full sequence is Leucine--tRNA ligase (804 aa).

Residues 40-51 (PYPSGAGLHVGH) carry the 'HIGH' region motif. The short motif at 576 to 580 (KMSKS) is the 'KMSKS' region element. K579 serves as a coordination point for ATP.

The protein belongs to the class-I aminoacyl-tRNA synthetase family.

It localises to the cytoplasm. The enzyme catalyses tRNA(Leu) + L-leucine + ATP = L-leucyl-tRNA(Leu) + AMP + diphosphate. The sequence is that of Leucine--tRNA ligase from Staphylococcus epidermidis (strain ATCC 35984 / DSM 28319 / BCRC 17069 / CCUG 31568 / BM 3577 / RP62A).